The chain runs to 760 residues: Photosystem I P700 chlorophyll a apoprotein A1 (760 aa).

A disordered region spans residues 1 to 22; that stretch reads MTISPPESGEKDKKILESPVKA. Over residues 8–22 the composition is skewed to basic and acidic residues; it reads SGEKDKKILESPVKA. 8 helical membrane passes run 76-99, 162-185, 201-225, 309-327, 368-391, 407-433, 455-477, and 551-569; these read IFSA…FHGA, LMAL…FHYH, MNHH…HIGA, IAHH…GHMY, RHAQ…HHMY, LGLF…IAMV, ALIS…LYIH, and LMIH…LILL. Cys-593 and Cys-602 together coordinate [4Fe-4S] cluster. The next 2 helical transmembrane spans lie at 609-630 and 674-696; these read HVFL…HFSW and ISMY…MFLF. His-685 lines the divinylchlorophyll a' pocket. Positions 693 and 701 each coordinate divinyl chlorophyll a. A phylloquinone-binding site is contributed by Trp-702. Residues 734-754 traverse the membrane as a helical segment; the sequence is AVGVTHFLVGGIATTWAFFHA.

This sequence belongs to the PsaA/PsaB family. In terms of assembly, the PsaA/B heterodimer binds the P700 divinyl chlorophyll special pair and subsequent electron acceptors. PSI consists of a core antenna complex that captures photons, and an electron transfer chain that converts photonic excitation into a charge separation. The cyanobacterial PSI reaction center is composed of one copy each of PsaA,B,C,D,E,F,I,J,K,L,M and X, and forms trimeric complexes. Requires PSI electron transfer chain: 5 divinyl chlorophyll a, 1 divinyl chlorophyll a', 2 phylloquinones and 3 4Fe-4S clusters. PSI core antenna: 90 divinyl chlorophyll a, 22 carotenoids, 3 phospholipids and 1 galactolipid. P700 is a divinyl chlorophyll a/divinyl chlorophyll a' dimer, A0 is one or more divinyl chlorophyll a, A1 is one or both phylloquinones and FX is a shared 4Fe-4S iron-sulfur center. as cofactor.

The protein localises to the cellular thylakoid membrane. The enzyme catalyses reduced [plastocyanin] + hnu + oxidized [2Fe-2S]-[ferredoxin] = oxidized [plastocyanin] + reduced [2Fe-2S]-[ferredoxin]. Functionally, psaA and PsaB bind P700, the primary electron donor of photosystem I (PSI), as well as the electron acceptors A0, A1 and FX. PSI is a plastocyanin/cytochrome c6-ferredoxin oxidoreductase, converting photonic excitation into a charge separation, which transfers an electron from the donor P700 chlorophyll pair to the spectroscopically characterized acceptors A0, A1, FX, FA and FB in turn. Oxidized P700 is reduced on the lumenal side of the thylakoid membrane by plastocyanin or cytochrome c6. The polypeptide is Photosystem I P700 chlorophyll a apoprotein A1 (Prochlorococcus marinus (strain MIT 9515)).